The sequence spans 226 residues: UPF0173 metal-dependent hydrolase Msed_2125 (226 aa).

It belongs to the UPF0173 family.

The protein is UPF0173 metal-dependent hydrolase Msed_2125 of Metallosphaera sedula (strain ATCC 51363 / DSM 5348 / JCM 9185 / NBRC 15509 / TH2).